A 533-amino-acid polypeptide reads, in one-letter code: Lysophosphatidylcholine acyltransferase (533 aa).

The Cytoplasmic portion of the chain corresponds to M1 to R79. The chain crosses the membrane as a helical; Signal-anchor for type II membrane protein span at residues V80–G100. The Lumenal portion of the chain corresponds to M101 to N533. The HXXXXD motif motif lies at H158–D163. EF-hand domains are found at residues L402–K437, S439–K474, and L475–S510.

The protein belongs to the 1-acyl-sn-glycerol-3-phosphate acyltransferase family.

The protein localises to the endoplasmic reticulum membrane. Its subcellular location is the golgi apparatus membrane. It localises to the lipid droplet. The enzyme catalyses a 1-acyl-sn-glycero-3-phosphocholine + an acyl-CoA = a 1,2-diacyl-sn-glycero-3-phosphocholine + CoA. The protein operates within lipid metabolism; phospholipid metabolism. Its function is as follows. Acetyltransferase which mediates the conversion of 1-acyl-sn-glycero-3-phosphocholine (LPC) into phosphatidylcholine (PC). Has a calcium-independent activity. Displays a clear preference for saturated fatty acyl-CoAs, and 1-myristoyl or 1-palmitoyl LPC as acyl donors and acceptors, respectively. Involved in the regulation of lipid droplet number and size. The polypeptide is Lysophosphatidylcholine acyltransferase (Drosophila melanogaster (Fruit fly)).